The following is a 102-amino-acid chain: Large ribosomal subunit protein uL24 (102 aa).

Belongs to the universal ribosomal protein uL24 family. Part of the 50S ribosomal subunit.

Functionally, one of two assembly initiator proteins, it binds directly to the 5'-end of the 23S rRNA, where it nucleates assembly of the 50S subunit. One of the proteins that surrounds the polypeptide exit tunnel on the outside of the subunit. The protein is Large ribosomal subunit protein uL24 of Cupriavidus necator (strain ATCC 17699 / DSM 428 / KCTC 22496 / NCIMB 10442 / H16 / Stanier 337) (Ralstonia eutropha).